We begin with the raw amino-acid sequence, 37 residues long: Large ribosomal subunit protein bL36 (37 aa).

This sequence belongs to the bacterial ribosomal protein bL36 family.

The sequence is that of Large ribosomal subunit protein bL36 from Janthinobacterium sp. (strain Marseille) (Minibacterium massiliensis).